The chain runs to 121 residues: Large ribosomal subunit protein uL18 (121 aa).

This sequence belongs to the universal ribosomal protein uL18 family. As to quaternary structure, part of the 50S ribosomal subunit; part of the 5S rRNA/L5/L18/L25 subcomplex. Contacts the 5S and 23S rRNAs.

Functionally, this is one of the proteins that bind and probably mediate the attachment of the 5S RNA into the large ribosomal subunit, where it forms part of the central protuberance. This Ehrlichia chaffeensis (strain ATCC CRL-10679 / Arkansas) protein is Large ribosomal subunit protein uL18.